Reading from the N-terminus, the 454-residue chain is 3-phosphoshikimate 1-carboxyvinyltransferase (454 aa).

Lys-39, Ser-40, and Arg-44 together coordinate 3-phosphoshikimate. Lys-39 contributes to the phosphoenolpyruvate binding site. Residues Gly-112 and Arg-140 each contribute to the phosphoenolpyruvate site. 3-phosphoshikimate contacts are provided by Ser-185, Gln-187, Asp-333, and Lys-360. Residue Gln-187 coordinates phosphoenolpyruvate. The active-site Proton acceptor is the Asp-333. 2 residues coordinate phosphoenolpyruvate: Arg-364 and Arg-405.

This sequence belongs to the EPSP synthase family. As to quaternary structure, monomer.

It localises to the cytoplasm. It carries out the reaction 3-phosphoshikimate + phosphoenolpyruvate = 5-O-(1-carboxyvinyl)-3-phosphoshikimate + phosphate. It participates in metabolic intermediate biosynthesis; chorismate biosynthesis; chorismate from D-erythrose 4-phosphate and phosphoenolpyruvate: step 6/7. Catalyzes the transfer of the enolpyruvyl moiety of phosphoenolpyruvate (PEP) to the 5-hydroxyl of shikimate-3-phosphate (S3P) to produce enolpyruvyl shikimate-3-phosphate and inorganic phosphate. The polypeptide is 3-phosphoshikimate 1-carboxyvinyltransferase (Xylella fastidiosa (strain 9a5c)).